A 283-amino-acid polypeptide reads, in one-letter code: MGQIIDGKTLAAEIDKQTMTEVQKLKNQGVEPHLVVVLVGENPASQIYVRNKEKRANKLGIKSTLVTMNADISENELLLKIQELNQTEDVNAILVQMPLPKHIDAFKVTMAIDPRKDVDGFHPVNVGKLFEGKTQHTPIACTPQGIMEMFQKYHIDIQGKRAVVVGRSSIVGKPMAALLLNANATVTLAHSYTKNLAALTKEADILVVATGIAHFIKEDQVKEGAVVIDVGMDRDENGKLTGDVDFENVEKHVSYITPVPKGVGPMTISMLMKQTVNLTKWSI.

NADP(+)-binding positions include 166-168 (GRS) and S191.

It belongs to the tetrahydrofolate dehydrogenase/cyclohydrolase family. Homodimer.

The catalysed reaction is (6R)-5,10-methylene-5,6,7,8-tetrahydrofolate + NADP(+) = (6R)-5,10-methenyltetrahydrofolate + NADPH. It catalyses the reaction (6R)-5,10-methenyltetrahydrofolate + H2O = (6R)-10-formyltetrahydrofolate + H(+). It functions in the pathway one-carbon metabolism; tetrahydrofolate interconversion. Functionally, catalyzes the oxidation of 5,10-methylenetetrahydrofolate to 5,10-methenyltetrahydrofolate and then the hydrolysis of 5,10-methenyltetrahydrofolate to 10-formyltetrahydrofolate. The chain is Bifunctional protein FolD from Pediococcus pentosaceus (strain ATCC 25745 / CCUG 21536 / LMG 10740 / 183-1w).